Reading from the N-terminus, the 308-residue chain is Oxygen-dependent coproporphyrinogen-III oxidase (308 aa).

A substrate-binding site is contributed by serine 100. Residues histidine 104 and histidine 114 each coordinate a divalent metal cation. Histidine 114 functions as the Proton donor in the catalytic mechanism. 116–118 (NFR) provides a ligand contact to substrate. Residues histidine 153 and histidine 183 each contribute to the a divalent metal cation site. Positions 248 to 283 (YVEFNLVFDRGTIFGLQSGGRTESILSSMPPMATWK) are important for dimerization. 266 to 268 (GGR) contacts substrate.

The protein belongs to the aerobic coproporphyrinogen-III oxidase family. In terms of assembly, homodimer. It depends on a divalent metal cation as a cofactor.

Its subcellular location is the cytoplasm. It catalyses the reaction coproporphyrinogen III + O2 + 2 H(+) = protoporphyrinogen IX + 2 CO2 + 2 H2O. It participates in porphyrin-containing compound metabolism; protoporphyrin-IX biosynthesis; protoporphyrinogen-IX from coproporphyrinogen-III (O2 route): step 1/1. Functionally, involved in the heme biosynthesis. Catalyzes the aerobic oxidative decarboxylation of propionate groups of rings A and B of coproporphyrinogen-III to yield the vinyl groups in protoporphyrinogen-IX. In Francisella tularensis subsp. mediasiatica (strain FSC147), this protein is Oxygen-dependent coproporphyrinogen-III oxidase.